Consider the following 450-residue polypeptide: Phosphoglucosamine mutase (450 aa).

Serine 101 (phosphoserine intermediate) is an active-site residue. 4 residues coordinate Mg(2+): serine 101, aspartate 241, aspartate 243, and aspartate 245. Serine 101 carries the post-translational modification Phosphoserine.

It belongs to the phosphohexose mutase family. Mg(2+) serves as cofactor. Post-translationally, activated by phosphorylation.

It carries out the reaction alpha-D-glucosamine 1-phosphate = D-glucosamine 6-phosphate. In terms of biological role, catalyzes the conversion of glucosamine-6-phosphate to glucosamine-1-phosphate. The protein is Phosphoglucosamine mutase of Ligilactobacillus salivarius (strain UCC118) (Lactobacillus salivarius).